A 159-amino-acid chain; its full sequence is Ubiquitin-like protein ATG12 (159 aa).

A disordered region spans residues 1–40; that stretch reads MASPQPPFGGGSNSNSNTASPSNNLSPTASPLLEGRDSPN. The segment covering 13–27 has biased composition (low complexity); the sequence is NSNSNTASPSNNLSP. Gly-159 is covalently cross-linked (Glycyl lysine isopeptide (Gly-Lys) (interchain with K-218 in ATG5)).

Belongs to the ATG12 family. Forms a conjugate with ATG5. Forms a thioester bond with the 'Cys-116' of ATG10. Interacts with the ATG7 C-terminal 40 amino acids domain. The ATG12-ATG5 conjugate forms a complex with several units of ATG16. The ATG12-ATG5 conjugate also associates with ATG3.

The protein resides in the preautophagosomal structure membrane. It is found in the cytoplasm. Its function is as follows. Ubiquitin-like protein involved in cytoplasm to vacuole transport (Cvt), autophagy vesicles formation, mitophagy, and nucleophagy. Conjugation with ATG5 through a ubiquitin-like conjugating system involving also ATG7 as an E1-like activating enzyme and ATG10 as an E2-like conjugating enzyme, is essential for its function. The ATG12-ATG5 conjugate acts as an E3-like enzyme which is required for lipidation of ATG8 and ATG8 association to the vesicle membranes. ATG12-ATG5 rearranges the ATG3 catalytic center and enhances its E2 activity. Plays a role in sexual development and perithecia formation. The protein is Ubiquitin-like protein ATG12 of Sordaria macrospora (strain ATCC MYA-333 / DSM 997 / K(L3346) / K-hell).